Here is a 266-residue protein sequence, read N- to C-terminus: Tryptophan synthase alpha chain (266 aa).

Active-site proton acceptor residues include Glu49 and Asp60.

This sequence belongs to the TrpA family. Tetramer of two alpha and two beta chains.

The enzyme catalyses (1S,2R)-1-C-(indol-3-yl)glycerol 3-phosphate + L-serine = D-glyceraldehyde 3-phosphate + L-tryptophan + H2O. The protein operates within amino-acid biosynthesis; L-tryptophan biosynthesis; L-tryptophan from chorismate: step 5/5. Functionally, the alpha subunit is responsible for the aldol cleavage of indoleglycerol phosphate to indole and glyceraldehyde 3-phosphate. This is Tryptophan synthase alpha chain from Chloroflexus aurantiacus (strain ATCC 29364 / DSM 637 / Y-400-fl).